We begin with the raw amino-acid sequence, 207 residues long: MSRYRGPRLRIIRRLQNLPGLTNKLVESKKNKVSGSDQSIQKKVSQYGIRLEAKQRLRFNYGLTERQLLNYVRIARGAKGSTGQILLQLLEMRLDNILFRLGFVPTIPSARQLINHRHILVNNRIVDVPSFHCKPKDIITIGAPKTYQSILSKRLESFAKDQIPEHLTLSLSEPKKPKGFVNYLINRESIGLKINELLVVEYYSRKA.

In terms of domain architecture, S4 RNA-binding spans 92–153 (MRLDNILFRL…PKTYQSILSK (62 aa)).

The protein belongs to the universal ribosomal protein uS4 family. In terms of assembly, part of the 30S ribosomal subunit. Contacts protein S5. The interaction surface between S4 and S5 is involved in control of translational fidelity.

Its subcellular location is the plastid. The protein localises to the chloroplast. One of the primary rRNA binding proteins, it binds directly to 16S rRNA where it nucleates assembly of the body of the 30S subunit. In terms of biological role, with S5 and S12 plays an important role in translational accuracy. This is Small ribosomal subunit protein uS4c (rps4) from Equisetum laevigatum (Smooth horsetail).